The following is a 239-amino-acid chain: Small ribosomal subunit protein uS3 (239 aa).

The region spanning Ile-39–Arg-107 is the KH type-2 domain. Residues Pro-212–Glu-221 show a composition bias toward basic and acidic residues. The tract at residues Pro-212–Arg-239 is disordered. Residues Gly-230 to Arg-239 show a composition bias toward gly residues.

The protein belongs to the universal ribosomal protein uS3 family. Part of the 30S ribosomal subunit. Forms a tight complex with proteins S10 and S14.

Its function is as follows. Binds the lower part of the 30S subunit head. Binds mRNA in the 70S ribosome, positioning it for translation. This Ruegeria sp. (strain TM1040) (Silicibacter sp.) protein is Small ribosomal subunit protein uS3.